The chain runs to 323 residues: Acetyl-coenzyme A carboxylase carboxyl transferase subunit alpha (323 aa).

One can recognise a CoA carboxyltransferase C-terminal domain in the interval arginine 39–glutamine 293.

This sequence belongs to the AccA family. In terms of assembly, acetyl-CoA carboxylase is a heterohexamer composed of biotin carboxyl carrier protein (AccB), biotin carboxylase (AccC) and two subunits each of ACCase subunit alpha (AccA) and ACCase subunit beta (AccD).

It is found in the cytoplasm. It carries out the reaction N(6)-carboxybiotinyl-L-lysyl-[protein] + acetyl-CoA = N(6)-biotinyl-L-lysyl-[protein] + malonyl-CoA. The protein operates within lipid metabolism; malonyl-CoA biosynthesis; malonyl-CoA from acetyl-CoA: step 1/1. Component of the acetyl coenzyme A carboxylase (ACC) complex. First, biotin carboxylase catalyzes the carboxylation of biotin on its carrier protein (BCCP) and then the CO(2) group is transferred by the carboxyltransferase to acetyl-CoA to form malonyl-CoA. The sequence is that of Acetyl-coenzyme A carboxylase carboxyl transferase subunit alpha from Burkholderia orbicola (strain AU 1054).